The following is a 313-amino-acid chain: Dimethyladenosine transferase (313 aa).

The interval 1–21 (MPKVKSGAIGRRRGRQEQRRE) is disordered. The S-adenosyl-L-methionine site is built by H37, L39, G64, E85, D113, and N128.

Belongs to the class I-like SAM-binding methyltransferase superfamily. rRNA adenine N(6)-methyltransferase family. Part of the small subunit (SSU) processome, composed of more than 70 proteins and the RNA chaperone small nucleolar RNA (snoRNA) U3.

The protein resides in the nucleus. Its subcellular location is the nucleoplasm. It localises to the nucleolus. The enzyme catalyses adenosine(1779)/adenosine(1780) in 18S rRNA + 4 S-adenosyl-L-methionine = N(6)-dimethyladenosine(1779)/N(6)-dimethyladenosine(1780) in 18S rRNA + 4 S-adenosyl-L-homocysteine + 4 H(+). Specifically dimethylates two adjacent adenosines in the loop of a conserved hairpin near the 3'-end of 18S rRNA in the 40S particle. Involved in the pre-rRNA processing steps leading to small-subunit rRNA production independently of its RNA-modifying catalytic activity. Part of the small subunit (SSU) processome, first precursor of the small eukaryotic ribosomal subunit. During the assembly of the SSU processome in the nucleolus, many ribosome biogenesis factors, an RNA chaperone and ribosomal proteins associate with the nascent pre-rRNA and work in concert to generate RNA folding, modifications, rearrangements and cleavage as well as targeted degradation of pre-ribosomal RNA by the RNA exosome. The chain is Dimethyladenosine transferase (DIMT1) from Macaca fascicularis (Crab-eating macaque).